Consider the following 472-residue polypeptide: Zinc finger CCCH domain-containing protein 59 (472 aa).

The interval 87–139 is disordered; sequence YKSPEGNRPRQNAANGSAKPQVIGTGHRVSNQPRKNAVYGPRSSSLSDTRGCG. The segment at 145 to 172 adopts a C3H1-type zinc-finger fold; sequence SPKKSVCNFWKDGNCKKGEKCQFLHSWS. WD repeat units lie at residues 185–226, 261–301, 310–347, 350–387, and 436–472; these read GHKN…RSIN, HLEG…SDPF, HHSG…CRMT, QHIG…SLKV, and FSTQ…GTKV.

In Arabidopsis thaliana (Mouse-ear cress), this protein is Zinc finger CCCH domain-containing protein 59 (ZFWD3).